A 257-amino-acid chain; its full sequence is Beta-fibrinogenase mucrofibrase-4 (257 aa).

Positions 1 to 18 (MVLIRVLANLLILQLSYA) are cleaved as a signal peptide. Residues 19 to 24 (QKSSEL) constitute a propeptide that is removed on maturation. The Peptidase S1 domain occupies 25 to 248 (VIGGDECNIN…HLDWIKGFIA (224 aa)). Disulfide bonds link Cys31–Cys162, Cys49–Cys65, Cys97–Cys255, Cys141–Cys209, Cys173–Cys188, and Cys199–Cys224. Residues His64 and Asp109 each act as charge relay system in the active site. The Charge relay system role is filled by Ser203.

Belongs to the peptidase S1 family. Snake venom subfamily. In terms of assembly, monomer. In terms of tissue distribution, expressed by the venom gland.

It localises to the secreted. Snake venom serine protease with fibrinogenolytic activities. Cleaves beta-chain of fibrinogen (FGB) efficiently and shows relatively lower activity on alpha-chain. This Protobothrops mucrosquamatus (Taiwan habu) protein is Beta-fibrinogenase mucrofibrase-4.